A 358-amino-acid chain; its full sequence is UDP-3-O-acylglucosamine N-acyltransferase (358 aa).

Residue His252 is the Proton acceptor of the active site.

It belongs to the transferase hexapeptide repeat family. LpxD subfamily. In terms of assembly, homotrimer.

The catalysed reaction is a UDP-3-O-[(3R)-3-hydroxyacyl]-alpha-D-glucosamine + a (3R)-hydroxyacyl-[ACP] = a UDP-2-N,3-O-bis[(3R)-3-hydroxyacyl]-alpha-D-glucosamine + holo-[ACP] + H(+). Its pathway is bacterial outer membrane biogenesis; LPS lipid A biosynthesis. Its function is as follows. Catalyzes the N-acylation of UDP-3-O-acylglucosamine using 3-hydroxyacyl-ACP as the acyl donor. Is involved in the biosynthesis of lipid A, a phosphorylated glycolipid that anchors the lipopolysaccharide to the outer membrane of the cell. This is UDP-3-O-acylglucosamine N-acyltransferase from Paraburkholderia phymatum (strain DSM 17167 / CIP 108236 / LMG 21445 / STM815) (Burkholderia phymatum).